A 196-amino-acid polypeptide reads, in one-letter code: HTH-type transcriptional regulator EcpR (196 aa).

The HTH luxR-type domain maps to lysine 138–glutamine 196. A DNA-binding region (H-T-H motif) is located at residues proline 162–arginine 181.

Belongs to the EcpR/MatA family.

Its subcellular location is the cytoplasm. Its function is as follows. Part of the ecpRABCDE operon, which encodes the E.coli common pilus (ECP). ECP is found in both commensal and pathogenic strains and plays a dual role in early-stage biofilm development and host cell recognition. Positively regulates the expression of the ecp operon by binding to two TTCCT boxes. In Escherichia coli O157:H7, this protein is HTH-type transcriptional regulator EcpR (ecpR).